The chain runs to 439 residues: Tol-Pal system protein TolB (439 aa).

Residues 1–21 form the signal peptide; the sequence is MRFRLALSLLSLALFAAPAAA.

This sequence belongs to the TolB family. As to quaternary structure, the Tol-Pal system is composed of five core proteins: the inner membrane proteins TolA, TolQ and TolR, the periplasmic protein TolB and the outer membrane protein Pal. They form a network linking the inner and outer membranes and the peptidoglycan layer.

The protein resides in the periplasm. In terms of biological role, part of the Tol-Pal system, which plays a role in outer membrane invagination during cell division and is important for maintaining outer membrane integrity. In Rhizorhabdus wittichii (strain DSM 6014 / CCUG 31198 / JCM 15750 / NBRC 105917 / EY 4224 / RW1) (Sphingomonas wittichii), this protein is Tol-Pal system protein TolB.